Reading from the N-terminus, the 199-residue chain is Putative peroxiredoxin ycf42 (199 aa).

Residues 8 to 165 (LRVGQLAPDF…TLRVLQAIQY (158 aa)) form the Thioredoxin domain. Residue C53 is the Cysteine sulfenic acid (-SOH) intermediate of the active site.

It belongs to the peroxiredoxin family. AhpC/Prx1 subfamily. As to quaternary structure, homodimer; disulfide-linked, upon oxidation. Post-translationally, the Cys-53-SH group is the primary site of oxidation by H(2)O(2), and the oxidized Cys-53 (probably Cys-SOH) rapidly reacts with Cys-174-SH of the other subunit to form an intermolecular disulfide. This disulfide is subsequently reduced by thioredoxin.

The protein localises to the plastid. The protein resides in the chloroplast. It carries out the reaction a hydroperoxide + [thioredoxin]-dithiol = an alcohol + [thioredoxin]-disulfide + H2O. Thiol-specific peroxidase that catalyzes the reduction of hydrogen peroxide and organic hydroperoxides to water and alcohols, respectively. Plays a role in cell protection against oxidative stress by detoxifying peroxides. The polypeptide is Putative peroxiredoxin ycf42 (ycf42) (Pyropia yezoensis (Susabi-nori)).